Consider the following 1192-residue polypeptide: Methionine synthase (1192 aa).

In terms of domain architecture, Hcy-binding spans 1-312; it reads MTAADKHLYD…AHIREVAAAV (312 aa). The Zn(2+) site is built by Cys231, Cys297, and Cys298. A Pterin-binding domain is found at 343–601; sequence VLVIGERTNA…RIPEEQRNVA (259 aa). In terms of domain architecture, B12-binding N-terminal spans 635 to 728; it reads RLAELAGLPL…HMERSDDDSG (94 aa). The region spanning 729-866 is the B12-binding domain; the sequence is KGRIVLATVK…SAKRGEAPDE (138 aa). Residues 739 to 743, His742, Ser787, and Ala845 each bind methylcob(III)alamin; that span reads GDVHD. Residues 860–904 are disordered; that stretch reads RGEAPDENSPEAIKAREKEAERKARHQRSKRIAAQRKAAEEPVEV. A compositionally biased stretch (basic and acidic residues) spans 872 to 881; that stretch reads IKAREKEAER. Residues 882 to 893 are compositionally biased toward basic residues; it reads KARHQRSKRIAA. One can recognise an AdoMet activation domain in the interval 893–1192; it reads AQRKAAEEPV…HHPEAKYFNV (300 aa). S-adenosyl-L-methionine is bound by residues Asp940, Arg1135, and 1189 to 1190; that span reads YF.

The protein belongs to the vitamin-B12 dependent methionine synthase family. The cofactor is methylcob(III)alamin. Zn(2+) is required as a cofactor.

The enzyme catalyses (6S)-5-methyl-5,6,7,8-tetrahydrofolate + L-homocysteine = (6S)-5,6,7,8-tetrahydrofolate + L-methionine. The protein operates within amino-acid biosynthesis; L-methionine biosynthesis via de novo pathway; L-methionine from L-homocysteine (MetH route): step 1/1. Its function is as follows. Catalyzes the transfer of a methyl group from methyl-cobalamin to homocysteine, yielding enzyme-bound cob(I)alamin and methionine. Subsequently, remethylates the cofactor using methyltetrahydrofolate. The sequence is that of Methionine synthase (metH) from Mycobacterium tuberculosis (strain ATCC 25618 / H37Rv).